The following is a 1015-amino-acid chain: Putative helicase mov-10-B.2 (1015 aa).

The tract at residues 94 to 130 (QWFRPRRRQQNQANATPGNVSSVTPSSDQGPSCPESG) is disordered. The segment covering 109–123 (TPGNVSSVTPSSDQG) has biased composition (polar residues). 555 to 562 (GPPGTGKT) contributes to the ATP binding site. Residues 677-680 (DEAG) carry the DEAG box motif.

Belongs to the DNA2/NAM7 helicase family. SDE3 subfamily.

It is found in the cytoplasm. The protein localises to the P-body. It catalyses the reaction ATP + H2O = ADP + phosphate + H(+). In terms of biological role, probable RNA helicase. Required for RNA-mediated gene silencing by the RNA-induced silencing complex (RISC). Required for both miRNA-mediated translational repression and miRNA-mediated cleavage of complementary mRNAs by RISC. This Danio rerio (Zebrafish) protein is Putative helicase mov-10-B.2 (mov10b.2).